Here is a 601-residue protein sequence, read N- to C-terminus: Elongation factor 4 (601 aa).

One can recognise a tr-type G domain in the interval 6 to 188; it reads AHIRNFSIIA…QIVRKVPPPK (183 aa). Residues 18-23 and 135-138 contribute to the GTP site; these read DHGKST and NKVD.

This sequence belongs to the TRAFAC class translation factor GTPase superfamily. Classic translation factor GTPase family. LepA subfamily.

The protein resides in the cell inner membrane. The catalysed reaction is GTP + H2O = GDP + phosphate + H(+). Required for accurate and efficient protein synthesis under certain stress conditions. May act as a fidelity factor of the translation reaction, by catalyzing a one-codon backward translocation of tRNAs on improperly translocated ribosomes. Back-translocation proceeds from a post-translocation (POST) complex to a pre-translocation (PRE) complex, thus giving elongation factor G a second chance to translocate the tRNAs correctly. Binds to ribosomes in a GTP-dependent manner. This Anaeromyxobacter sp. (strain Fw109-5) protein is Elongation factor 4.